Consider the following 411-residue polypeptide: Bifunctional protein GlmU (411 aa).

The segment at 1–204 is pyrophosphorylase; it reads MDAIILCAGK…NGKLHGVELK (204 aa). Residues 6-9, glutamine 74, and glycine 79 contribute to the UTP site; that span reads LCAG. Positions 80, 130, 142, and 158 each coordinate N-acetyl-alpha-D-glucosamine 1-phosphate. The tract at residues 205–224 is linker; sequence GYWNDIGHPWDVLSANNHFL. Positions 225 to 411 are N-acetyltransferase; that stretch reads NKIISKVSGK…DELVITKKRN (187 aa). The active-site Proton acceptor is the histidine 308. Acetyl-CoA is bound by residues alanine 384 and lysine 401.

In the N-terminal section; belongs to the N-acetylglucosamine-1-phosphate uridyltransferase family. It in the C-terminal section; belongs to the transferase hexapeptide repeat family.

It carries out the reaction N-acetyl-alpha-D-glucosamine 1-phosphate + UTP + H(+) = UDP-N-acetyl-alpha-D-glucosamine + diphosphate. It catalyses the reaction alpha-D-glucosamine 1-phosphate + acetyl-CoA = N-acetyl-alpha-D-glucosamine 1-phosphate + CoA + H(+). The protein operates within nucleotide-sugar biosynthesis; UDP-N-acetyl-alpha-D-glucosamine biosynthesis; N-acetyl-alpha-D-glucosamine 1-phosphate from alpha-D-glucosamine 6-phosphate (route II): step 2/2. Its pathway is nucleotide-sugar biosynthesis; UDP-N-acetyl-alpha-D-glucosamine biosynthesis; UDP-N-acetyl-alpha-D-glucosamine from N-acetyl-alpha-D-glucosamine 1-phosphate: step 1/1. In terms of biological role, catalyzes the last two sequential reactions in the de novo biosynthetic pathway for UDP-N-acetyl-glucosamine (UDP-GlcNAc). Responsible for the acetylation of GlcN-1-P to GlcNAc-1-P, and for the uridyl transfer from UTP to GlcNAc-1-P, to produce UDP-GlcNAc and pyrophosphate. This Methanococcus maripaludis (strain DSM 14266 / JCM 13030 / NBRC 101832 / S2 / LL) protein is Bifunctional protein GlmU.